The primary structure comprises 216 residues: Probable transaldolase (216 aa).

The Schiff-base intermediate with substrate role is filled by K83.

This sequence belongs to the transaldolase family. Type 3B subfamily.

The protein resides in the cytoplasm. The catalysed reaction is D-sedoheptulose 7-phosphate + D-glyceraldehyde 3-phosphate = D-erythrose 4-phosphate + beta-D-fructose 6-phosphate. It participates in carbohydrate degradation; pentose phosphate pathway; D-glyceraldehyde 3-phosphate and beta-D-fructose 6-phosphate from D-ribose 5-phosphate and D-xylulose 5-phosphate (non-oxidative stage): step 2/3. Transaldolase is important for the balance of metabolites in the pentose-phosphate pathway. This Symbiobacterium thermophilum (strain DSM 24528 / JCM 14929 / IAM 14863 / T) protein is Probable transaldolase.